A 156-amino-acid chain; its full sequence is ATP synthase subunit b (156 aa).

The helical transmembrane segment at 7 to 27 threads the bilayer; sequence LFAQIIVFFGLVWFTMKFVWP.

The protein belongs to the ATPase B chain family. In terms of assembly, F-type ATPases have 2 components, F(1) - the catalytic core - and F(0) - the membrane proton channel. F(1) has five subunits: alpha(3), beta(3), gamma(1), delta(1), epsilon(1). F(0) has three main subunits: a(1), b(2) and c(10-14). The alpha and beta chains form an alternating ring which encloses part of the gamma chain. F(1) is attached to F(0) by a central stalk formed by the gamma and epsilon chains, while a peripheral stalk is formed by the delta and b chains.

Its subcellular location is the cell inner membrane. Functionally, f(1)F(0) ATP synthase produces ATP from ADP in the presence of a proton or sodium gradient. F-type ATPases consist of two structural domains, F(1) containing the extramembraneous catalytic core and F(0) containing the membrane proton channel, linked together by a central stalk and a peripheral stalk. During catalysis, ATP synthesis in the catalytic domain of F(1) is coupled via a rotary mechanism of the central stalk subunits to proton translocation. Its function is as follows. Component of the F(0) channel, it forms part of the peripheral stalk, linking F(1) to F(0). The sequence is that of ATP synthase subunit b from Neisseria gonorrhoeae (strain NCCP11945).